Reading from the N-terminus, the 194-residue chain is Peptidyl-tRNA hydrolase (194 aa).

H17 is a tRNA binding site. Residue H22 is the Proton acceptor of the active site. The tRNA site is built by F68, N70, and N116.

It belongs to the PTH family. As to quaternary structure, monomer.

The protein localises to the cytoplasm. The enzyme catalyses an N-acyl-L-alpha-aminoacyl-tRNA + H2O = an N-acyl-L-amino acid + a tRNA + H(+). Hydrolyzes ribosome-free peptidyl-tRNAs (with 1 or more amino acids incorporated), which drop off the ribosome during protein synthesis, or as a result of ribosome stalling. Its function is as follows. Catalyzes the release of premature peptidyl moieties from peptidyl-tRNA molecules trapped in stalled 50S ribosomal subunits, and thus maintains levels of free tRNAs and 50S ribosomes. The chain is Peptidyl-tRNA hydrolase from Xanthomonas oryzae pv. oryzae (strain MAFF 311018).